The chain runs to 265 residues: Undecaprenyl-diphosphatase (265 aa).

Transmembrane regions (helical) follow at residues I7–S27, T45–H65, L86–I106, L108–I128, I145–F165, I186–I206, I214–C234, and T245–N265.

Belongs to the UppP family.

Its subcellular location is the cell membrane. The enzyme catalyses di-trans,octa-cis-undecaprenyl diphosphate + H2O = di-trans,octa-cis-undecaprenyl phosphate + phosphate + H(+). Functionally, catalyzes the dephosphorylation of undecaprenyl diphosphate (UPP). Confers resistance to bacitracin. The polypeptide is Undecaprenyl-diphosphatase (Buchnera aphidicola subsp. Acyrthosiphon pisum (strain Tuc7)).